We begin with the raw amino-acid sequence, 240 residues long: Vesicle-associated membrane protein 727 (240 aa).

Over 1–215 (MSQKGLIYSF…MWLQSLQMKL (215 aa)) the chain is Cytoplasmic. The region spanning 6–133 (LIYSFVAKGT…NLDREFGPIL (128 aa)) is the Longin domain. The 61-residue stretch at 149-209 (KLSKLKAQIT…RQLRRKMWLQ (61 aa)) folds into the v-SNARE coiled-coil homology domain. Residues 216 to 236 (MVAGAVFSFILIVWVVACGGF) form a helical; Anchor for type IV membrane protein membrane-spanning segment. The Vesicular segment spans residues 237–240 (KCSS).

The protein belongs to the synaptobrevin family. As to quaternary structure, interacts with subunits of the class C core vacuole/endosome tethering (CORVET) complex including VPS11, VCL1, VPS18, VPS33, VPS3 and VPS8. Highly expressed in flowers. Detected in leaves, stems and roots.

It is found in the early endosome membrane. Its subcellular location is the endosome membrane. Functionally, involved in the targeting and/or fusion of transport vesicles to their target membrane. In Arabidopsis thaliana (Mouse-ear cress), this protein is Vesicle-associated membrane protein 727 (VAMP727).